The primary structure comprises 362 residues: Chorismate synthase (362 aa).

R48 provides a ligand contact to NADP(+). Residues 131–133 (RAS), 243–244 (NA), G288, 303–307 (KPTSS), and R329 each bind FMN.

It belongs to the chorismate synthase family. In terms of assembly, homotetramer. FMNH2 is required as a cofactor.

The catalysed reaction is 5-O-(1-carboxyvinyl)-3-phosphoshikimate = chorismate + phosphate. Its pathway is metabolic intermediate biosynthesis; chorismate biosynthesis; chorismate from D-erythrose 4-phosphate and phosphoenolpyruvate: step 7/7. Catalyzes the anti-1,4-elimination of the C-3 phosphate and the C-6 proR hydrogen from 5-enolpyruvylshikimate-3-phosphate (EPSP) to yield chorismate, which is the branch point compound that serves as the starting substrate for the three terminal pathways of aromatic amino acid biosynthesis. This reaction introduces a second double bond into the aromatic ring system. This chain is Chorismate synthase, found in Bartonella tribocorum (strain CIP 105476 / IBS 506).